We begin with the raw amino-acid sequence, 195 residues long: Imidazoleglycerol-phosphate dehydratase (195 aa).

The protein belongs to the imidazoleglycerol-phosphate dehydratase family.

It is found in the cytoplasm. It carries out the reaction D-erythro-1-(imidazol-4-yl)glycerol 3-phosphate = 3-(imidazol-4-yl)-2-oxopropyl phosphate + H2O. Its pathway is amino-acid biosynthesis; L-histidine biosynthesis; L-histidine from 5-phospho-alpha-D-ribose 1-diphosphate: step 6/9. This Bordetella avium (strain 197N) protein is Imidazoleglycerol-phosphate dehydratase.